The primary structure comprises 485 residues: Aspartyl/glutamyl-tRNA(Asn/Gln) amidotransferase subunit B (485 aa).

This sequence belongs to the GatB/GatE family. GatB subfamily. Heterotrimer of A, B and C subunits.

The catalysed reaction is L-glutamyl-tRNA(Gln) + L-glutamine + ATP + H2O = L-glutaminyl-tRNA(Gln) + L-glutamate + ADP + phosphate + H(+). The enzyme catalyses L-aspartyl-tRNA(Asn) + L-glutamine + ATP + H2O = L-asparaginyl-tRNA(Asn) + L-glutamate + ADP + phosphate + 2 H(+). Its function is as follows. Allows the formation of correctly charged Asn-tRNA(Asn) or Gln-tRNA(Gln) through the transamidation of misacylated Asp-tRNA(Asn) or Glu-tRNA(Gln) in organisms which lack either or both of asparaginyl-tRNA or glutaminyl-tRNA synthetases. The reaction takes place in the presence of glutamine and ATP through an activated phospho-Asp-tRNA(Asn) or phospho-Glu-tRNA(Gln). The protein is Aspartyl/glutamyl-tRNA(Asn/Gln) amidotransferase subunit B of Anaplasma marginale (strain St. Maries).